The sequence spans 282 residues: Ermin (282 aa).

Polar residues-rich tracts occupy residues 1–12 (MTDTPVTLSGSE) and 21–30 (NGQQPSSQTR). The disordered stretch occupies residues 1-71 (MTDTPVTLSG…NSKGNVLPRG (71 aa)). Phosphoserine is present on residues Ser72, Ser212, Ser224, Ser228, and Ser231. Positions 212–224 (SPLKEESLAREDS) are enriched in basic and acidic residues. The disordered stretch occupies residues 212–246 (SPLKEESLAREDSPLSSPSSQPGTPDEQLVLGKKG). A compositionally biased stretch (polar residues) spans 225–234 (PLSSPSSQPG). Thr235 is subject to Phosphothreonine. A binds actin region spans residues 263 to 282 (KIRKGNTKQRIDEFESMMHL).

In terms of assembly, binds actin. Expressed specifically by the oligodendrocytes. Highest expression seen in the spinal cord followed by brainstem, cerebellum, thalamus, and hypothalamus. In the myelin sheath, found mainly in the abaxon and the lateral few terminal loops. Its apposition to the myelinated axon, through the latter, defines an axonal subregion, termed juxtanode, at the Ranvier node-paranode junction.

It localises to the cytoplasm. The protein localises to the cytoskeleton. In terms of biological role, plays a role in cytoskeletal rearrangements during the late wrapping and/or compaction phases of myelinogenesis as well as in maintenance and stability of myelin sheath in the adult. May play an important role in late-stage oligodendroglia maturation, myelin/Ranvier node formation during CNS development, and in the maintenance and plasticity of related structures in the mature CNS. This is Ermin (Ermn) from Rattus norvegicus (Rat).